Reading from the N-terminus, the 170-residue chain is tRNA-splicing endonuclease (170 aa).

Catalysis depends on residues Tyr-106, His-116, and Lys-147.

This sequence belongs to the tRNA-intron endonuclease family. Archaeal short subfamily. As to quaternary structure, homotetramer; although the tetramer contains four active sites, only two participate in the cleavage. Therefore, it should be considered as a dimer of dimers.

The enzyme catalyses pretRNA = a 3'-half-tRNA molecule with a 5'-OH end + a 5'-half-tRNA molecule with a 2',3'-cyclic phosphate end + an intron with a 2',3'-cyclic phosphate and a 5'-hydroxyl terminus.. In terms of biological role, endonuclease that removes tRNA introns. Cleaves pre-tRNA at the 5'- and 3'-splice sites to release the intron. The products are an intron and two tRNA half-molecules bearing 2',3' cyclic phosphate and 5'-OH termini. Recognizes a pseudosymmetric substrate in which 2 bulged loops of 3 bases are separated by a stem of 4 bp. This chain is tRNA-splicing endonuclease, found in Methanothermobacter thermautotrophicus (strain ATCC 29096 / DSM 1053 / JCM 10044 / NBRC 100330 / Delta H) (Methanobacterium thermoautotrophicum).